Reading from the N-terminus, the 354-residue chain is Serum paraoxonase/arylesterase 2 (354 aa).

A disulfide bridge connects residues Cys42 and Cys352. Ca(2+) contacts are provided by Glu53 and Asp54. The Proton acceptor role is filled by His114. Ca(2+) is bound by residues Ile116, Asn167, Asp168, and Asn223. Asn254 carries an N-linked (GlcNAc...) asparagine glycan. Asp268 and Asn269 together coordinate Ca(2+). N-linked (GlcNAc...) asparagine glycans are attached at residues Asn269 and Asn323.

The protein belongs to the paraoxonase family. Homotrimer. It depends on Ca(2+) as a cofactor. In terms of processing, glycosylated. Post-translationally, the signal sequence is not cleaved.

Its subcellular location is the membrane. It carries out the reaction a phenyl acetate + H2O = a phenol + acetate + H(+). The enzyme catalyses an N-acyl-L-homoserine lactone + H2O = an N-acyl-L-homoserine + H(+). In terms of biological role, capable of hydrolyzing lactones and a number of aromatic carboxylic acid esters. The protein is Serum paraoxonase/arylesterase 2 (Pon2) of Rattus norvegicus (Rat).